A 472-amino-acid polypeptide reads, in one-letter code: DEAD-box ATP-dependent RNA helicase 58, chloroplastic (472 aa).

A chloroplast-targeting transit peptide spans 1–54 (MASQLLNVPHLAFFPKISYASVFSTLKPSFFHSTSTRRALKSSPSSRIINLQAV). A Q motif motif is present at residues 76–104 (RQICQGFVPEHILHRMEEIGFVFPTDIQR). The Helicase ATP-binding domain maps to 107-286 (LPTLFTGRDC…DCIQQKWTKR (180 aa)). 120 to 127 (AQTGSGKT) contacts ATP. The DEAD box motif lies at 231–234 (DEVD). The Helicase C-terminal domain maps to 314–472 (NKHQVLLALL…LMFSCEEMML (159 aa)).

The protein belongs to the DEAD box helicase family.

Its subcellular location is the plastid. The protein resides in the chloroplast. The catalysed reaction is ATP + H2O = ADP + phosphate + H(+). This Arabidopsis thaliana (Mouse-ear cress) protein is DEAD-box ATP-dependent RNA helicase 58, chloroplastic (RH58).